A 452-amino-acid chain; its full sequence is 1,3-beta-glucanosyltransferase gel1 (452 aa).

Residues 1–19 (MKASAVTAALAVGASTVLA) form the signal peptide. Residues Cys71 and Cys100 are joined by a disulfide bond. Residues Tyr89, Asn159, Glu160, Asp201, and Arg206 each contribute to the (1,3-beta-D-glucosyl)n site. Glu160 functions as the Proton donor in the catalytic mechanism. Intrachain disulfides connect Cys215–Cys345 and Cys233–Cys264. Residue Asn249 is glycosylated (N-linked (GlcNAc...) asparagine). The active-site Nucleophile is the Glu261. Tyr292 contributes to the (1,3-beta-D-glucosyl)n binding site. Over residues 325 to 340 (EKTSNPSGDGNYNKTG) the composition is skewed to polar residues. The segment at 325–419 (EKTSNPSGDG…SGTSTSSKGA (95 aa)) is disordered. The N-linked (GlcNAc...) asparagine glycan is linked to Asn337. Residues 393–419 (STATAEPGSGSATGSSSSGTSTSSKGA) are compositionally biased toward low complexity. Ala419 is lipidated: GPI-like-anchor amidated alanine. Residues 420 to 452 (AAGLTVPSLTMAPVVVGAVTLLSTVFGAGLVLL) constitute a propeptide, removed in mature form.

This sequence belongs to the glycosyl hydrolase 72 family. The GPI-like anchor contains a phosphoceramide lipid group.

It localises to the cell membrane. Splits internally a 1,3-beta-glucan molecule and transfers the newly generated reducing end (the donor) to the non-reducing end of another 1,3-beta-glucan molecule (the acceptor) forming a 1,3-beta linkage, resulting in the elongation of 1,3-beta-glucan chains in the cell wall. Involved in cell wall morphogenesis. In Aspergillus fumigatus (strain ATCC MYA-4609 / CBS 101355 / FGSC A1100 / Af293) (Neosartorya fumigata), this protein is 1,3-beta-glucanosyltransferase gel1 (gel1).